The sequence spans 251 residues: Small ribosomal subunit protein uS2 (251 aa).

The protein belongs to the universal ribosomal protein uS2 family.

This Nitrosomonas europaea (strain ATCC 19718 / CIP 103999 / KCTC 2705 / NBRC 14298) protein is Small ribosomal subunit protein uS2.